Consider the following 743-residue polypeptide: MNRGRGVRKRNAPEKASILETCDEEIRAEVAQLFNKVRSYVPPAGEKWTLPDPNVVLCDPHVSHPRLQALKHSLNEVKNQLSDKDLSVWHQHTCFTNRAGTVTSHLRSTTNAELCTQAWAKFYEILGTFQLLPDSALKTGELNSIHLCEAPGAFISALNHFLKTSSLHCDWNWIANTLNPYYEANGRGCTITDDRLIVHTLPWWFFGSDNTGDIMLQKHLLELPRFVSNMRSVDLVTADGSFDCQGDPGEQERLVAPLQHCEAICALLLLGTGGSFVLKMFTLFEHSSVCLLYLLACCFRSVNIFKPGTSKSGNSELYIVCLDYQAKEQIRPLLSKLIRNYGPDLASTASLFPRRCIPDSFLSQHEEICTFFQALQVNTIQENLRLFVCMSTEQRRRLEQLREYAAEFYTKRFSVQYLPRKSWVCRGGVVRWVKVCERKQMGSLNQRKEMELQGWKQRLAQGNYGPFIEKHLVAAEGCEVVLNGPLDECDLGAWFALEGAALPKVCSSIFCDQEMLDFLNEALEGNLRVKTVNWSLKALPTCSSCSSDSPVSILSEICSHPDVTSCLVLGSQSWCDDKLTGVRIQPEFLQGPSYCGVQNVTMHDGQPDYQLELLNAVLFALQKQDQGSTLVIPLSSALTRFTSGLVFTLHLCFRYITFRCLSGWPPAALVCMGFSPPSALPSLLDFLQNVMEKMKKVELGRQVLQFVPLEELLRGELPHFLSSFNTAVIRQQLHMLIQLDQST.

Residues 113 to 326 (ELCTQAWAKF…LYIVCLDYQA (214 aa)) enclose the Adrift-type SAM-dependent 2'-O-MTase domain. The active site involves Lys121. 3 residues coordinate S-adenosyl-L-methionine: Gly152, Trp171, and Asp239. Asp239 is an active-site residue. The active-site Proton acceptor is Lys279.

It is found in the nucleus. Its subcellular location is the cytoplasm. The enzyme catalyses a 5'-end (N(7)-methyl 5'-triphosphoguanosine)-(2'-O-methyl-ribonucleoside)-(ribonucleotide) in mRNA + S-adenosyl-L-methionine = a 5'-end (N(7)-methyl 5'-triphosphoguanosine)-(2'-O-methyl-ribonucleoside)-(2'-O-methyl-ribonucleotide) in mRNA + S-adenosyl-L-homocysteine + H(+). Functionally, S-adenosyl-L-methionine-dependent methyltransferase that mediates mRNA cap2 2'-O-ribose methylation to the 5'-cap structure of mRNAs. Methylates the ribose of the second nucleotide of a m(7)GpppG-capped mRNA and small nuclear RNA (snRNA) (cap0) to produce m(7)GpppRmpNm (cap2). The chain is Cap-specific mRNA (nucleoside-2'-O-)-methyltransferase 2 (cmtr2) from Danio rerio (Zebrafish).